We begin with the raw amino-acid sequence, 259 residues long: Proteasome subunit alpha (259 aa).

Belongs to the peptidase T1A family. As to quaternary structure, the 20S proteasome core is composed of 14 alpha and 14 beta subunits that assemble into four stacked heptameric rings, resulting in a barrel-shaped structure. The two inner rings, each composed of seven catalytic beta subunits, are sandwiched by two outer rings, each composed of seven alpha subunits. The catalytic chamber with the active sites is on the inside of the barrel. Has a gated structure, the ends of the cylinder being occluded by the N-termini of the alpha-subunits. Is capped at one or both ends by the proteasome regulatory ATPase, PAN.

It is found in the cytoplasm. Its activity is regulated as follows. The formation of the proteasomal ATPase PAN-20S proteasome complex, via the docking of the C-termini of PAN into the intersubunit pockets in the alpha-rings, triggers opening of the gate for substrate entry. Interconversion between the open-gate and close-gate conformations leads to a dynamic regulation of the 20S proteasome proteolysis activity. Functionally, component of the proteasome core, a large protease complex with broad specificity involved in protein degradation. The protein is Proteasome subunit alpha of Methanococcus maripaludis (strain C7 / ATCC BAA-1331).